Here is a 136-residue protein sequence, read N- to C-terminus: Small ribosomal subunit protein uS9 (136 aa).

Residues 115–136 (KVKERKKPGLRKARKARQFSKR) are disordered. Residues 117–136 (KERKKPGLRKARKARQFSKR) are compositionally biased toward basic residues.

This sequence belongs to the universal ribosomal protein uS9 family.

This is Small ribosomal subunit protein uS9 from Mycoplasmopsis pulmonis (strain UAB CTIP) (Mycoplasma pulmonis).